The following is a 453-amino-acid chain: Nuclear hormone receptor family member nhr-12 (453 aa).

The tract at residues Met-1–Gln-37 is disordered. Residues Thr-18 to Thr-36 show a composition bias toward low complexity. Residues Lys-44–Asn-119 constitute a DNA-binding region (nuclear receptor). 2 NR C4-type zinc fingers span residues Cys-47 to Cys-67 and Cys-83 to Cys-107. Residues Phe-178–Lys-451 enclose the NR LBD domain.

The protein belongs to the nuclear hormone receptor family.

It is found in the nucleus. Orphan nuclear receptor. This chain is Nuclear hormone receptor family member nhr-12 (nhr-12), found in Caenorhabditis elegans.